The primary structure comprises 644 residues: Core protein VP4 (644 aa).

Belongs to the orbivirus VP4 family.

It localises to the virion. Its function is as follows. The VP4 protein is one of the five proteins (with VP1, VP3, VP6 and VP7) which form the inner capsid of the virus. The chain is Core protein VP4 (Segment-4) from Bluetongue virus 13 (isolate USA) (BTV 13).